A 362-amino-acid chain; its full sequence is MHNLLENLRRRLLAQRTPEPLPPTSQGLARPSHDVVRGPCDADIPPDARNTMMPEGITVEEALAVAELPQKHALDILATAQAIRSVHKGGPAALCGIVNAKSGRCPEDCAFCAQSSHHATGSPVHALLDAETLLRRAEELRQSGAERYGIVTSGTRLTVRELATLCEAAVRIRRETGIALCGSLGQLTPDAAACLKEAGFSSYHHNLETSRSFFPAICSTHAYDDDIATVRAARAAGLRTCSGGIFGMGETDAQRIELSATLRELDVDSIPVNLLSPIPGTPLQHRPTMPPMRALVSIAIYRLMHPARDILVCGGREATLGPWQSWIFLAGANGMMVGNYLTTTGRDMADDLAMLATLGVRA.

The segment at Ala14–Pro39 is disordered. The region spanning His87–Arg316 is the Radical SAM core domain. The [4Fe-4S] cluster site is built by Cys105, Cys109, and Cys112. Residues Cys181 and Cys241 each coordinate [2Fe-2S] cluster.

It belongs to the radical SAM superfamily. Biotin synthase family. Homodimer. The cofactor is [4Fe-4S] cluster. It depends on [2Fe-2S] cluster as a cofactor.

It carries out the reaction (4R,5S)-dethiobiotin + (sulfur carrier)-SH + 2 reduced [2Fe-2S]-[ferredoxin] + 2 S-adenosyl-L-methionine = (sulfur carrier)-H + biotin + 2 5'-deoxyadenosine + 2 L-methionine + 2 oxidized [2Fe-2S]-[ferredoxin]. The protein operates within cofactor biosynthesis; biotin biosynthesis; biotin from 7,8-diaminononanoate: step 2/2. Catalyzes the conversion of dethiobiotin (DTB) to biotin by the insertion of a sulfur atom into dethiobiotin via a radical-based mechanism. In Nitratidesulfovibrio vulgaris (strain ATCC 29579 / DSM 644 / CCUG 34227 / NCIMB 8303 / VKM B-1760 / Hildenborough) (Desulfovibrio vulgaris), this protein is Biotin synthase.